Reading from the N-terminus, the 945-residue chain is Netrin receptor UNC5B (945 aa).

A signal peptide spans 1–26; sequence MRARSGARGALLLALLLCWDPTPSLA. The Extracellular segment spans residues 27-377; the sequence is GIDSGGQALP…LEPSGDVALY (351 aa). The Ig-like domain occupies 48–145; sequence PHFLLEPEDA…SGTTKSRRAY (98 aa). 9 disulfides stabilise this stretch: Cys69–Cys130, Cys81–Cys128, Cys174–Cys225, Cys258–Cys295, Cys262–Cys299, Cys273–Cys285, Cys314–Cys348, Cys318–Cys353, and Cys326–Cys338. The Ig-like C2-type domain maps to 153–242; the sequence is KNFDQEPLAK…KRRSTTATVI (90 aa). Asn222 is a glycosylation site (N-linked (GlcNAc...) asparagine). 2 TSP type-1 domains span residues 246 to 300 and 302 to 354; these read NGGW…TVCP and DGAW…GLCV. The N-linked (GlcNAc...) asparagine glycan is linked to Asn347. The helical transmembrane segment at 378-398 threads the bilayer; that stretch reads AGLVVAVFVVLAVLMAVGVIV. At 399-945 the chain is on the cytoplasmic side; the sequence is YRRNCRDFDT…LVAMTTDGDC (547 aa). Cys403 carries S-palmitoyl cysteine lipidation. In terms of domain architecture, ZU5 spans 543–686; the sequence is SSVSGTFGCL…LGTYVFTGES (144 aa). The residue at position 581 (Tyr581) is a Phosphotyrosine. The segment at 689 to 838 is UPA domain; it reads RSAVKRLQLA…AETPAGSLDA (150 aa). The interval 707–725 is interaction with DCC; the sequence is SLEYSLRVYCLEDTPAALK. A Death domain is found at 865-943; it reads KICNSLDAPN…EMLVAMTTDG (79 aa).

This sequence belongs to the unc-5 family. Interacts with the cytoplasmic part of DCC. Interacts with GNAI2 via its cytoplasmic part. Interacts (via death domain) with DAPK1 (via death domain). Interacts (via extracellular domain) with FLRT3 (via extracellular domain); the interaction is direct. Interacts (via extracellular domain) with FLRT2 and FLRT3 (via extracellular domain), but has higher affinity for FLRT3. Identified in a complex with FLRT3 and ADGRL3; does not interact with ADGRL3 by itself. Phosphorylated on cytoplasmic tyrosine residues. In terms of processing, proteolytically cleaved by caspases during apoptosis. The cleavage does not take place when the receptor is associated with netrin ligand. Its cleavage by caspases is required to induce apoptosis. Post-translationally, palmitoylation is required for pro-apoptotic activity, but not for location at lipid rafts. In terms of tissue distribution, mainly expressed in regions of differentiating neurons. Expressed in the developing sensory ganglia that flank the spinal cord from E12, peaking at E14. Expressed in the roof plate region of the spinal cord from E14.

The protein localises to the cell membrane. The protein resides in the membrane raft. Receptor for netrin required for axon guidance. Mediates axon repulsion of neuronal growth cones in the developing nervous system upon ligand binding. Axon repulsion in growth cones may be caused by its association with DCC that may trigger signaling for repulsion. Functions as a netrin receptor that negatively regulates vascular branching during angiogenesis. Mediates retraction of tip cell filopodia on endothelial growth cones in response to netrin. It also acts as a dependence receptor required for apoptosis induction when not associated with netrin ligand. Mediates apoptosis by activating DAPK1. In the absence of NTN1, activates DAPK1 by reducing its autoinhibitory phosphorylation at Ser-308 thereby increasing its catalytic activity. The polypeptide is Netrin receptor UNC5B (Unc5b) (Rattus norvegicus (Rat)).